A 702-amino-acid chain; its full sequence is Ribosomal RNA large subunit methyltransferase K/L (702 aa).

Positions 43-154 constitute a THUMP domain; the sequence is LIYQSLMWSR…KETASIALDL (112 aa).

It belongs to the methyltransferase superfamily. RlmKL family.

Its subcellular location is the cytoplasm. The enzyme catalyses guanosine(2445) in 23S rRNA + S-adenosyl-L-methionine = N(2)-methylguanosine(2445) in 23S rRNA + S-adenosyl-L-homocysteine + H(+). The catalysed reaction is guanosine(2069) in 23S rRNA + S-adenosyl-L-methionine = N(2)-methylguanosine(2069) in 23S rRNA + S-adenosyl-L-homocysteine + H(+). In terms of biological role, specifically methylates the guanine in position 2445 (m2G2445) and the guanine in position 2069 (m7G2069) of 23S rRNA. This chain is Ribosomal RNA large subunit methyltransferase K/L, found in Salmonella agona (strain SL483).